Consider the following 350-residue polypeptide: Holliday junction branch migration complex subunit RuvB (350 aa).

The segment at 4-184 is large ATPase domain (RuvB-L); sequence TDRLIAAQPQ…FGIVQRLEFY (181 aa). ATP-binding positions include Ile23, Arg24, Gly65, Lys68, Thr69, Thr70, 131-133, Arg174, Tyr184, and Arg221; that span reads EDY. Thr69 is a Mg(2+) binding site. The interval 185–255 is small ATPAse domain (RuvB-S); sequence AVEELTEIVV…IADQALNMLH (71 aa). The head domain (RuvB-H) stretch occupies residues 258 to 350; sequence RHGLDHMDRR…PLTPPGESDA (93 aa). The DNA site is built by Arg294, Arg313, and Arg318.

The protein belongs to the RuvB family. In terms of assembly, homohexamer. Forms an RuvA(8)-RuvB(12)-Holliday junction (HJ) complex. HJ DNA is sandwiched between 2 RuvA tetramers; dsDNA enters through RuvA and exits via RuvB. An RuvB hexamer assembles on each DNA strand where it exits the tetramer. Each RuvB hexamer is contacted by two RuvA subunits (via domain III) on 2 adjacent RuvB subunits; this complex drives branch migration. In the full resolvosome a probable DNA-RuvA(4)-RuvB(12)-RuvC(2) complex forms which resolves the HJ.

It is found in the cytoplasm. It catalyses the reaction ATP + H2O = ADP + phosphate + H(+). In terms of biological role, the RuvA-RuvB-RuvC complex processes Holliday junction (HJ) DNA during genetic recombination and DNA repair, while the RuvA-RuvB complex plays an important role in the rescue of blocked DNA replication forks via replication fork reversal (RFR). RuvA specifically binds to HJ cruciform DNA, conferring on it an open structure. The RuvB hexamer acts as an ATP-dependent pump, pulling dsDNA into and through the RuvAB complex. RuvB forms 2 homohexamers on either side of HJ DNA bound by 1 or 2 RuvA tetramers; 4 subunits per hexamer contact DNA at a time. Coordinated motions by a converter formed by DNA-disengaged RuvB subunits stimulates ATP hydrolysis and nucleotide exchange. Immobilization of the converter enables RuvB to convert the ATP-contained energy into a lever motion, pulling 2 nucleotides of DNA out of the RuvA tetramer per ATP hydrolyzed, thus driving DNA branch migration. The RuvB motors rotate together with the DNA substrate, which together with the progressing nucleotide cycle form the mechanistic basis for DNA recombination by continuous HJ branch migration. Branch migration allows RuvC to scan DNA until it finds its consensus sequence, where it cleaves and resolves cruciform DNA. The polypeptide is Holliday junction branch migration complex subunit RuvB (Chromohalobacter salexigens (strain ATCC BAA-138 / DSM 3043 / CIP 106854 / NCIMB 13768 / 1H11)).